The following is a 281-amino-acid chain: Formamidopyrimidine-DNA glycosylase (281 aa).

The active-site Schiff-base intermediate with DNA is Pro2. Glu3 functions as the Proton donor in the catalytic mechanism. Lys58 (proton donor; for beta-elimination activity) is an active-site residue. Residues His100, Arg119, and Arg160 each coordinate DNA. The FPG-type zinc-finger motif lies at 245-281; sequence RVYGREGAPCPTPGCTGTVQRIVQSGRSSFFCPLCQQ. Arg271 functions as the Proton donor; for delta-elimination activity in the catalytic mechanism.

This sequence belongs to the FPG family. In terms of assembly, monomer. The cofactor is Zn(2+).

The catalysed reaction is Hydrolysis of DNA containing ring-opened 7-methylguanine residues, releasing 2,6-diamino-4-hydroxy-5-(N-methyl)formamidopyrimidine.. It catalyses the reaction 2'-deoxyribonucleotide-(2'-deoxyribose 5'-phosphate)-2'-deoxyribonucleotide-DNA = a 3'-end 2'-deoxyribonucleotide-(2,3-dehydro-2,3-deoxyribose 5'-phosphate)-DNA + a 5'-end 5'-phospho-2'-deoxyribonucleoside-DNA + H(+). Involved in base excision repair of DNA damaged by oxidation or by mutagenic agents. Acts as a DNA glycosylase that recognizes and removes damaged bases. Has a preference for oxidized purines, such as 7,8-dihydro-8-oxoguanine (8-oxoG). Has AP (apurinic/apyrimidinic) lyase activity and introduces nicks in the DNA strand. Cleaves the DNA backbone by beta-delta elimination to generate a single-strand break at the site of the removed base with both 3'- and 5'-phosphates. The chain is Formamidopyrimidine-DNA glycosylase from Paracoccus denitrificans (strain Pd 1222).